We begin with the raw amino-acid sequence, 241 residues long: Penton protein H240R (241 aa).

Belongs to the asfivirus H240R family.

The protein resides in the virion. Functionally, forms the penton at the fivefold vertices of the icosahedral capsid. Together with the minor capsid proteins (p17, p49, and M1249L), forms a complicated network immediately below the outer capsid shell, stabilizing the whole capsid. The sequence is that of Penton protein H240R from African swine fever virus (isolate Tick/Malawi/Lil 20-1/1983) (ASFV).